The primary structure comprises 1357 residues: DNA-directed RNA polymerase subunit beta (1357 aa).

Belongs to the RNA polymerase beta chain family. As to quaternary structure, the RNAP catalytic core consists of 2 alpha, 1 beta, 1 beta' and 1 omega subunit. When a sigma factor is associated with the core the holoenzyme is formed, which can initiate transcription.

It carries out the reaction RNA(n) + a ribonucleoside 5'-triphosphate = RNA(n+1) + diphosphate. In terms of biological role, DNA-dependent RNA polymerase catalyzes the transcription of DNA into RNA using the four ribonucleoside triphosphates as substrates. The sequence is that of DNA-directed RNA polymerase subunit beta from Pseudomonas aeruginosa (strain UCBPP-PA14).